Consider the following 456-residue polypeptide: Gamma-glutamyl phosphate reductase (456 aa).

The residue at position 2 (Ser-2) is an N-acetylserine.

Belongs to the gamma-glutamyl phosphate reductase family.

The catalysed reaction is L-glutamate 5-semialdehyde + phosphate + NADP(+) = L-glutamyl 5-phosphate + NADPH + H(+). It participates in amino-acid biosynthesis; L-proline biosynthesis; L-glutamate 5-semialdehyde from L-glutamate: step 2/2. Its function is as follows. Catalyzes the NADPH dependent reduction of L-gamma-glutamyl 5-phosphate into L-glutamate 5-semialdehyde and phosphate. The product spontaneously undergoes cyclization to form 1-pyrroline-5-carboxylate. The chain is Gamma-glutamyl phosphate reductase (PRO2) from Saccharomyces cerevisiae (strain ATCC 204508 / S288c) (Baker's yeast).